We begin with the raw amino-acid sequence, 306 residues long: Tyrosine recombinase XerC (306 aa).

The region spanning 10–94 (ARCHSYLQQF…AVKQWGEFLL (85 aa)) is the Core-binding (CB) domain. The region spanning 115-294 (PLPKNIDVDS…DFQHLAKVYD (180 aa)) is the Tyr recombinase domain. Residues arginine 154, lysine 178, histidine 246, arginine 249, and histidine 272 contribute to the active site. Tyrosine 281 (O-(3'-phospho-DNA)-tyrosine intermediate) is an active-site residue.

Belongs to the 'phage' integrase family. XerC subfamily. Forms a cyclic heterotetrameric complex composed of two molecules of XerC and two molecules of XerD.

The protein localises to the cytoplasm. Functionally, site-specific tyrosine recombinase, which acts by catalyzing the cutting and rejoining of the recombining DNA molecules. The XerC-XerD complex is essential to convert dimers of the bacterial chromosome into monomers to permit their segregation at cell division. It also contributes to the segregational stability of plasmids. The sequence is that of Tyrosine recombinase XerC from Shewanella oneidensis (strain ATCC 700550 / JCM 31522 / CIP 106686 / LMG 19005 / NCIMB 14063 / MR-1).